The chain runs to 1432 residues: ABC transporter asL7 (1432 aa).

Over residues 1 to 20 (MFDTTKLQSSTQDGSTSSVT) the composition is skewed to polar residues. A disordered region spans residues 1–36 (MFDTTKLQSSTQDGSTSSVTGEPIFGANDPNSELNP). The ABC transporter 1 domain maps to 91–341 (LALPGMLIRN…FERLGFECPS (251 aa)). N-linked (GlcNAc...) asparagine glycosylation is present at N265. 6 helical membrane passes run 450-470 (PTIV…SLFF), 484-504 (VVLF…VMTL), 530-550 (VLMD…VFYF), 559-579 (GNFF…SGIF), 597-617 (MIPA…MVPI), and 702-722 (IGIV…TSEY). The 244-residue stretch at 786-1029 (FHWRNVCYDI…TLVEYFERKA (244 aa)) folds into the ABC transporter 2 domain. Residue 822-829 (GVSGAGKT) coordinates ATP. The N-linked (GlcNAc...) asparagine glycan is linked to N1017. Residues 1076 to 1095 (LSRLREHGSQSNSHDSEKSE) are disordered. The next 6 membrane-spanning stretches (helical) occupy residues 1135–1155 (FALC…SPLS), 1166–1186 (VFQL…QFII), 1215–1235 (IPYY…PIGL), 1251–1271 (LMWL…HFCI), 1279–1299 (AGAN…GALI), and 1317–1337 (LSYL…VTCA). N1371 carries N-linked (GlcNAc...) asparagine glycosylation. The chain crosses the membrane as a helical span at residues 1402 to 1422 (FGIIWVYVIFNISAAITLYWV).

The protein belongs to the ABC transporter superfamily. ABCG family. PDR (TC 3.A.1.205) subfamily.

Its subcellular location is the cell membrane. ABC transporter; part of the gene cluster that mediates the biosynthesis of xenovulene A, an unusual meroterpenoid that has potent inhibitory effects on the human gamma-aminobutyrate A (GABAA) benzodiazepine receptor. The polypeptide is ABC transporter asL7 (Sarocladium schorii (Acremonium strictum (strain IMI 501407))).